Consider the following 605-residue polypeptide: Heparan-sulfate 6-O-sulfotransferase 2 (605 aa).

Topologically, residues 1-4 are cytoplasmic; the sequence is MALP. The interval 1–66 is disordered; the sequence is MALPACAVRE…GVSHGFHTRP (66 aa). Residues 5-27 form a helical; Signal-anchor for type II membrane protein membrane-spanning segment; sequence ACAVREFEPPRQPERGAPVRTTC. A compositionally biased stretch (basic and acidic residues) spans 9–18; sequence REFEPPRQPE. At 28 to 605 the chain is on the lumenal side; sequence PRRHSRVEAE…DYIGSVEKWR (578 aa). A glycan (N-linked (GlcNAc...) asparagine) is linked at N209. 233 to 241 is a 3'-phosphoadenylyl sulfate binding site; that stretch reads HIQKTGGTT. Residues 263–264, R280, W285, and H290 each bind substrate; that span reads KK. Catalysis depends on H290, which acts as the Proton acceptor. Residues R325 and S333 each contribute to the 3'-phosphoadenylyl sulfate site. Substrate is bound by residues H337 and W344. An N-linked (GlcNAc...) asparagine glycan is attached at N404. Position 457–459 (457–459) interacts with 3'-phosphoadenylyl sulfate; the sequence is TQY. N460 carries an N-linked (GlcNAc...) asparagine glycan. 463–464 is a binding site for 3'-phosphoadenylyl sulfate; sequence RA. Positions 530–605 are disordered; the sequence is FQSQGQGQSQ…DYIGSVEKWR (76 aa). Low complexity predominate over residues 531-571; the sequence is QSQGQGQSQNPNQNQSQNPNPNANQNLTQNLMQNLTQSLSQ. N544, N556, N564, N589, and N592 each carry an N-linked (GlcNAc...) asparagine glycan. Over residues 579-597 the composition is skewed to polar residues; it reads KQNSGKEQNDNTSNGTNDY.

The protein belongs to the sulfotransferase 6 family.

The protein localises to the membrane. The catalysed reaction is alpha-D-glucosaminyl-[heparan sulfate](n) + 3'-phosphoadenylyl sulfate = 6-sulfo-alpha-D-glucosaminyl-[heparan sulfate](n) + adenosine 3',5'-bisphosphate + H(+). Functionally, 6-O-sulfation enzyme which catalyzes the transfer of sulfate from 3'-phosphoadenosine 5'-phosphosulfate (PAPS) to position 6 of the N-sulfoglucosamine residue (GlcNS) of heparan sulfate. The polypeptide is Heparan-sulfate 6-O-sulfotransferase 2 (Homo sapiens (Human)).